Consider the following 1425-residue polypeptide: Death-associated protein kinase dapk-1 (1425 aa).

Residues 28-289 (YEIETELGSG…VEECLQHPWI (262 aa)) form the Protein kinase domain. ATP is bound by residues 34–42 (LGSGQFAVV) and Lys57. Asp155 serves as the catalytic Proton acceptor. 10 ANK repeats span residues 392-421 (NGATAMHCAAKYGHAEVFNYFHMKGGNICA), 425-454 (NGDTPLHVACRFAQHTVAGYVANEKIDVDS), 458-487 (TGETALHCAVESADTRVVRLLLQLRPRLDL), 491-520 (SGDTVLHLAADSINPRIVPLLVCLAPPLHL), 524-553 (REETPLHVAAARGHVDCVQALLDANSPIDA), 557-586 (DGKTALIIALENGNVDIASILITNGCDINH), 590-619 (HGDTALHIASKHGLLQAVQTLCHCAVTVDS), 623-652 (NKKTALHLAAHYGHVDIIRVLLLARADVTL), 810-841 (GGYEPMHTCYDHFVGNADCIHLILYRTSDPTE), and 934-963 (IGMKTLKMELAKCRTNILAKLLKPLAILDT). The Roc domain maps to 695-950 (LDTSLRRIKL…MELAKCRTNI (256 aa)). A Death domain is found at 1308-1389 (ELACLLDPPH…DARDALYRTV (82 aa)).

The protein belongs to the protein kinase superfamily. CAMK Ser/Thr protein kinase family. DAP kinase subfamily. As to quaternary structure, interacts with ptrn-1. The cofactor is Mg(2+). Expressed in epidermis, muscles and neurons.

It localises to the cytoplasm. It is found in the cytosol. The protein resides in the cytoskeleton. The enzyme catalyses L-seryl-[protein] + ATP = O-phospho-L-seryl-[protein] + ADP + H(+). The catalysed reaction is L-threonyl-[protein] + ATP = O-phospho-L-threonyl-[protein] + ADP + H(+). Negative regulator of epidermal barrier repair and innate immune responses to wounding. The role in epidermal tissue integrity and wound healing is established through the inhibition of epidermal microtubule stability, possibly via the negative regulation of the microtubule minus-end binding protein ptrn-1. In epidermis, prevents expression of specific unc-44 isoforms probably by promoting nuclear localization of pinn-1, which in turn may affect sydn-1-ssup-72-mediated regulation of alternative polyadenylation of unc-44 mRNA. Appears to act downstream of or in parallel to muscarinic signaling in the regulation of autophagy. The polypeptide is Death-associated protein kinase dapk-1 (Caenorhabditis elegans).